The sequence spans 206 residues: Guanylate kinase (206 aa).

A Guanylate kinase-like domain is found at 6–184 (GILFILSGPS…AVDKVKTIIK (179 aa)). Residue 13–20 (GPSGVGKG) participates in ATP binding.

Belongs to the guanylate kinase family.

It localises to the cytoplasm. The enzyme catalyses GMP + ATP = GDP + ADP. Functionally, essential for recycling GMP and indirectly, cGMP. The protein is Guanylate kinase of Oceanobacillus iheyensis (strain DSM 14371 / CIP 107618 / JCM 11309 / KCTC 3954 / HTE831).